The chain runs to 860 residues: Leucine--tRNA ligase (860 aa).

Residues 42 to 52 (PYPSGRLHMGH) carry the 'HIGH' region motif. The 'KMSKS' region motif lies at 619–623 (KMSKS). ATP is bound at residue Lys622.

Belongs to the class-I aminoacyl-tRNA synthetase family.

The protein localises to the cytoplasm. The enzyme catalyses tRNA(Leu) + L-leucine + ATP = L-leucyl-tRNA(Leu) + AMP + diphosphate. The polypeptide is Leucine--tRNA ligase (Shigella dysenteriae serotype 1 (strain Sd197)).